Consider the following 333-residue polypeptide: UDP-3-O-acylglucosamine N-acyltransferase (333 aa).

The Proton acceptor role is filled by His-225.

The protein belongs to the transferase hexapeptide repeat family. LpxD subfamily. As to quaternary structure, homotrimer.

It catalyses the reaction a UDP-3-O-[(3R)-3-hydroxyacyl]-alpha-D-glucosamine + a (3R)-hydroxyacyl-[ACP] = a UDP-2-N,3-O-bis[(3R)-3-hydroxyacyl]-alpha-D-glucosamine + holo-[ACP] + H(+). It functions in the pathway bacterial outer membrane biogenesis; LPS lipid A biosynthesis. Functionally, catalyzes the N-acylation of UDP-3-O-acylglucosamine using 3-hydroxyacyl-ACP as the acyl donor. Is involved in the biosynthesis of lipid A, a phosphorylated glycolipid that anchors the lipopolysaccharide to the outer membrane of the cell. The chain is UDP-3-O-acylglucosamine N-acyltransferase from Paracidovorax citrulli (strain AAC00-1) (Acidovorax citrulli).